A 96-amino-acid chain; its full sequence is Protein RnfH (96 aa).

The protein belongs to the UPF0125 (RnfH) family.

This chain is Protein RnfH, found in Hahella chejuensis (strain KCTC 2396).